The sequence spans 139 residues: Large ribosomal subunit protein uL24 (139 aa).

The interval 1 to 25 (MKRNTNVSSSRRKSRKAHFTASSGE) is disordered.

Belongs to the universal ribosomal protein uL24 family.

In Dictyostelium discoideum (Social amoeba), this protein is Large ribosomal subunit protein uL24 (rpl26).